The primary structure comprises 509 residues: MKRGRLPSSSEDSDDNGSLSTTWSQNSRSQHRRSSCSRPEDRKPSEVFRTDLITAMKLHDSYQLNPDEYYVLADPWRQEWEKGVQVPVSPGTIPQPVARVVSEEKSLMFIRPKKYIVSSGSEPPELGYVDIRTLADSVCRYDLNDMDAAWLELTNEEFKEMGMPELDEYTMERVLEEFEQRCYDNMNHAIETEEGLGIEYDEYVVCDVCQSPDGEDGNEMVFCDKCNICVHQACYGILKVPEGSWLCRTCALGVQPKCLLCPKKGGAMKPTRSGTKWVHVSCALWIPEVSIGSPEKMEPITKVSHIPSSRWALVCSLCNEKFGASIQCSVKNCRTAFHVTCAFDRGLEMKTILAENDEVKFKSYCPKHSSHRKAEEGLGEGTAQENGAPECSPRDPLEPFAGLEQNREEAHRVSVRKQKLQQLEDEFYTFVNLLDVARALRLPEEVVDFLYQYWKLKRKVNFNKPLITPKKDEEDNLAKREQDVLFRRLQLFTHLRQDLERVMTDTDTL.

The segment at 1–45 is disordered; sequence MKRGRLPSSSEDSDDNGSLSTTWSQNSRSQHRRSSCSRPEDRKPS. The tract at residues 60–80 is interaction with KAT7/HBO1 and histones; it reads DSYQLNPDEYYVLADPWRQEW. Positions 80 to 188 are interaction with histones; sequence WEKGVQVPVS…EQRCYDNMNH (109 aa). Ser-89 is subject to Phosphoserine. Position 92 is a phosphothreonine (Thr-92). Lys-114 is covalently cross-linked (Glycyl lysine isopeptide (Lys-Gly) (interchain with G-Cter in SUMO2)). The PHD-type 1 zinc finger occupies 203–253; that stretch reads YVVCDVCQSPDGEDGNEMVFCDKCNICVHQACYGILKVPEGSWLCRTCALG. The segment at 255–289 adopts a C2HC pre-PHD-type zinc-finger fold; that stretch reads QPKCLLCPKKGGAMKPTRSGTKWVHVSCALWIPEV. A PHD-type 2 zinc finger spans residues 313–369; that stretch reads LVCSLCNEKFGASIQCSVKNCRTAFHVTCAFDRGLEMKTILAENDEVKFKSYCPKHS. The segment at 373–399 is disordered; that stretch reads KAEEGLGEGTAQENGAPECSPRDPLEP.

It belongs to the JADE family. Component of the HBO1 complex composed at least of ING4 or ING5, KAT7/HBO1, MEAF6, and one of JADE1, JADE2 and JADE3. Interacts with NPHP4.

The protein resides in the nucleus. It is found in the chromosome. The protein localises to the cytoplasm. Its subcellular location is the cytoskeleton. It localises to the cilium basal body. Scaffold subunit of some HBO1 complexes, which have a histone H4 acetyltransferase activity. Plays a key role in HBO1 complex by directing KAT7/HBO1 specificity towards histone H4 acetylation (H4K5ac, H4K8ac and H4K12ac), regulating DNA replication initiation, regulating DNA replication initiation. May also promote acetylation of nucleosomal histone H4 by KAT5. Promotes apoptosis. May act as a renal tumor suppressor. Negatively regulates canonical Wnt signaling; at least in part, cooperates with NPHP4 in this function. This chain is Protein Jade-1 (JADE1), found in Bos taurus (Bovine).